Consider the following 230-residue polypeptide: Ureidoacrylate amidohydrolase RutB (230 aa).

The active-site Proton acceptor is the aspartate 24. Lysine 133 is an active-site residue. Cysteine 166 acts as the Nucleophile in catalysis.

Belongs to the isochorismatase family. RutB subfamily.

It carries out the reaction (Z)-3-ureidoacrylate + H2O + H(+) = (Z)-3-aminoacrylate + NH4(+) + CO2. The catalysed reaction is (Z)-3-ureidoacrylate + H2O = (Z)-3-aminoacrylate + carbamate + H(+). It catalyses the reaction (Z)-2-methylureidoacrylate + H2O + H(+) = (Z)-2-methylaminoacrylate + NH4(+) + CO2. In terms of biological role, hydrolyzes ureidoacrylate to form aminoacrylate and carbamate. The carbamate hydrolyzes spontaneously, thereby releasing one of the nitrogen atoms of the pyrimidine ring as ammonia and one of its carbon atoms as CO2. This is Ureidoacrylate amidohydrolase RutB from Escherichia coli (strain B / BL21-DE3).